Consider the following 123-residue polypeptide: D-ribose pyranase (123 aa).

His-20 serves as the catalytic Proton donor. Residues Asp-28, His-90, and 112–114 (YAN) contribute to the substrate site.

The protein belongs to the RbsD / FucU family. RbsD subfamily. Homodecamer.

Its subcellular location is the cytoplasm. It catalyses the reaction beta-D-ribopyranose = beta-D-ribofuranose. It participates in carbohydrate metabolism; D-ribose degradation; D-ribose 5-phosphate from beta-D-ribopyranose: step 1/2. Its function is as follows. Catalyzes the interconversion of beta-pyran and beta-furan forms of D-ribose. This is D-ribose pyranase from Corynebacterium glutamicum (strain ATCC 13032 / DSM 20300 / JCM 1318 / BCRC 11384 / CCUG 27702 / LMG 3730 / NBRC 12168 / NCIMB 10025 / NRRL B-2784 / 534).